We begin with the raw amino-acid sequence, 227 residues long: (S)-2-haloacid dehalogenase (227 aa).

Residue D10 is the Nucleophile of the active site. An (S)-2-haloacid-binding positions include 11 to 12, R41, and 118 to 119; these read LY and SN. Positions 175–180 are important for catalytic activity; the sequence is SSNAWD.

It belongs to the HAD-like hydrolase superfamily. S-2-haloalkanoic acid dehalogenase family.

The catalysed reaction is an (S)-2-haloacid + H2O = a (2R)-2-hydroxycarboxylate + a halide anion + H(+). The enzyme catalyses (S)-2-chloropropanoate + H2O = (R)-lactate + chloride + H(+). Its function is as follows. Catalyzes the hydrolytic dehalogenation of small (S)-2-haloalkanoic acids to yield the corresponding (R)-2-hydroxyalkanoic acids. Acts on acids of short chain lengths, C(2) to C(4), with inversion of configuration at C-2. Active with 2-halogenated carboxylic acids and converts only the S-isomer (or L-isomer) of 2-chloropropionic acid with inversion of configuration to produce R-lactate (or D-isomer). The protein is (S)-2-haloacid dehalogenase (dhl VII) of Pseudomonas fluorescens.